We begin with the raw amino-acid sequence, 697 residues long: Elongation factor G (697 aa).

One can recognise a tr-type G domain in the interval 6–281 (ENIRNIGICA…AVVDYLPSPI (276 aa)). Residues 15–22 (AHIDAGKT), 79–83 (DTPGH), and 133–136 (NKMD) contribute to the GTP site.

This sequence belongs to the TRAFAC class translation factor GTPase superfamily. Classic translation factor GTPase family. EF-G/EF-2 subfamily.

Its subcellular location is the cytoplasm. Catalyzes the GTP-dependent ribosomal translocation step during translation elongation. During this step, the ribosome changes from the pre-translocational (PRE) to the post-translocational (POST) state as the newly formed A-site-bound peptidyl-tRNA and P-site-bound deacylated tRNA move to the P and E sites, respectively. Catalyzes the coordinated movement of the two tRNA molecules, the mRNA and conformational changes in the ribosome. In Rickettsia bellii (strain OSU 85-389), this protein is Elongation factor G.